We begin with the raw amino-acid sequence, 54 residues long: MCTTLFLLSTLAMLWRRRFANRVQPEPSDVDGAARGSSLDADPQSSGREKEPLK.

C2 is lipidated: S-palmitoyl cysteine. Residues 25–54 (PEPSDVDGAARGSSLDADPQSSGREKEPLK) are disordered.

It belongs to the PRCD family. As to quaternary structure, interacts with RHO/rhodopsin; the interaction promotes PRCD stability. Post-translationally, palmitoylated at Cys-2. Palmitoylation is essential for protein stability and trafficking to the photoreceptor outer segment, but does not appear to be essential for membrane localization. Probably palmitoylated by ZDHHC3. Phosphorylated.

It is found in the cell projection. Its subcellular location is the cilium. It localises to the photoreceptor outer segment. The protein resides in the membrane. The protein localises to the endoplasmic reticulum. It is found in the golgi apparatus. In terms of biological role, involved in vision. This is Photoreceptor disk component PRCD from Homo sapiens (Human).